Consider the following 1319-residue polypeptide: Protein Jumonji (1319 aa).

Positions 1-11 are enriched in basic residues; the sequence is MSKERPKRNII. 7 disordered regions span residues 1–23, 50–130, 173–265, 351–382, 396–478, 499–537, and 549–599; these read MSKE…GMPW, DGID…PSLP, DEED…NTNG, YSNN…QSIN, HKMT…KALN, PIQK…PKRA, and QQRA…RSRA. Polar residues predominate over residues 61–70; the sequence is ASLSNGQLNG. Basic and acidic residues predominate over residues 74–88; that stretch reads GHKEDGSRSQRKDGG. The Nuclear localization signal motif lies at 96 to 102; sequence PAKKRPR. Positions 98 to 107 are enriched in basic residues; the sequence is KKRPRLHAQR. Over residues 109–121 the composition is skewed to polar residues; the sequence is FAQSQPNSPSNTP. Residues 173 to 185 are compositionally biased toward acidic residues; sequence DEEDLEDEDEIEE. Residues 191-200 show a composition bias toward polar residues; sequence VASTSCQSTP. The span at 221 to 251 shows a compositional bias: basic and acidic residues; it reads KDKELTPRSKARESSVGRDRSERCDESEISH. Residues 372 to 382 are compositionally biased toward polar residues; the sequence is LSHSGKAQSIN. The span at 413-424 shows a compositional bias: basic and acidic residues; it reads SAREEEVVDRPV. Residues 505–515 are compositionally biased toward pro residues; that stretch reads PAPPPSPPAAP. 2 stretches are compositionally biased toward low complexity: residues 516–525 and 554–570; these read ASPSMPQNPA and TNPT…ASKS. Residues 583-598 show a composition bias toward basic and acidic residues; the sequence is RLDRDRERERERERSR. A JmjN domain is found at 607 to 648; the sequence is VPIFKPSSREFQDPLVYLDSFREQVESCGLCRVLPPTDWRPE. The ARID domain occupies 671–779; sequence WGPNVQKLAC…FLLSYDLLSP (109 aa). Positions 798 to 811 are enriched in basic and acidic residues; that stretch reads RKRGPLEGHSDNGH. Residues 798–818 form a disordered region; the sequence is RKRGPLEGHSDNGHHSLALPR. A GSGFP motif motif is present at residues 944-948; that stretch reads GSGFP. A JmjC domain is found at 954-1118; sequence PFSKHGWNLT…LGYEAAKDLK (165 aa).

Belongs to the JARID2 family. Associates with the PRC2 complex.

It localises to the nucleus. In terms of biological role, regulator of histone methyltransferase complexes that plays an essential role in embryonic development. Acts by modulating histone methyltransferase activity and promoting the recruitment of histone methyltransferase complexes to their target genes. Binds DNA and mediates the recruitment of the PRC2 complex to target genes in embryonic stem cells. Does not have histone demethylase activity but regulates activity of various histone methyltransferase complexes. In embryonic stem cells, it associates with the PRC2 complex and inhibits trimethylation of 'Lys-27' of histone H3 (H3K27me3) by the PRC2 complex, thereby playing a key role in differentiation of embryonic stem cells and normal development. In Danio rerio (Zebrafish), this protein is Protein Jumonji (jarid2b).